The chain runs to 181 residues: Crossover junction endodeoxyribonuclease RuvC (181 aa).

Active-site residues include Asp-7, Glu-67, and Asp-139. Residues Asp-7, Glu-67, and Asp-139 each coordinate Mg(2+).

The protein belongs to the RuvC family. Homodimer which binds Holliday junction (HJ) DNA. The HJ becomes 2-fold symmetrical on binding to RuvC with unstacked arms; it has a different conformation from HJ DNA in complex with RuvA. In the full resolvosome a probable DNA-RuvA(4)-RuvB(12)-RuvC(2) complex forms which resolves the HJ. Requires Mg(2+) as cofactor.

The protein localises to the cytoplasm. The enzyme catalyses Endonucleolytic cleavage at a junction such as a reciprocal single-stranded crossover between two homologous DNA duplexes (Holliday junction).. Its function is as follows. The RuvA-RuvB-RuvC complex processes Holliday junction (HJ) DNA during genetic recombination and DNA repair. Endonuclease that resolves HJ intermediates. Cleaves cruciform DNA by making single-stranded nicks across the HJ at symmetrical positions within the homologous arms, yielding a 5'-phosphate and a 3'-hydroxyl group; requires a central core of homology in the junction. The consensus cleavage sequence is 5'-(A/T)TT(C/G)-3'. Cleavage occurs on the 3'-side of the TT dinucleotide at the point of strand exchange. HJ branch migration catalyzed by RuvA-RuvB allows RuvC to scan DNA until it finds its consensus sequence, where it cleaves and resolves the cruciform DNA. This Bordetella avium (strain 197N) protein is Crossover junction endodeoxyribonuclease RuvC.